The following is a 300-amino-acid chain: UPF0282 protein TON_1363 (300 aa).

This sequence belongs to the UPF0282 family.

This Thermococcus onnurineus (strain NA1) protein is UPF0282 protein TON_1363.